The primary structure comprises 347 residues: uncharacterized protein (347 aa).

5 residues coordinate Mn(2+): D207, D218, H279, E312, and E326.

This sequence belongs to the peptidase M24B family. Mn(2+) is required as a cofactor.

This is an uncharacterized protein from Methanocaldococcus jannaschii (strain ATCC 43067 / DSM 2661 / JAL-1 / JCM 10045 / NBRC 100440) (Methanococcus jannaschii).